A 118-amino-acid polypeptide reads, in one-letter code: Neutral phospholipase A2 homolog taipoxin beta chain 2 (118 aa).

Disulfide bonds link Cys11–Cys71, Cys27–Cys117, Cys29–Cys45, Cys44–Cys98, Cys51–Cys91, Cys60–Cys84, and Cys78–Cys89.

This sequence belongs to the phospholipase A2 family. Group I subfamily. D49 sub-subfamily. Heterotrimer of alpha, beta, and gamma chains; non-covalently linked. In terms of tissue distribution, expressed by the venom gland.

The protein localises to the secreted. In terms of biological role, heterotrimer: Snake venom phospholipase A2 (PLA2) heterotrimer that acts as a potent presynaptic neurotoxin by blocking synaptic transmission and synaptic vesicle recycling. May act by binding in a calcium-dependent fashion to neurotonal pentraxin-1 (NPTX1) and neurotonal pentraxin-2 (NPTX2), but not to neuronal pentraxin receptor (NPTXR). Also binds to taipoxin-associated calcium binding protein 49 (RCN2), a protein localized in the lumen of endoplasmic reticulum. Monomer (beta chain): Snake venom phospholipase A2 homolog that is neither toxic nor enzymatically active. Does not bind calcium. This chain is Neutral phospholipase A2 homolog taipoxin beta chain 2, found in Oxyuranus scutellatus scutellatus (Australian taipan).